Reading from the N-terminus, the 172-residue chain is 5'(3')-deoxyribonucleotidase (172 aa).

The active-site Nucleophile is aspartate 8. Residues aspartate 8, aspartate 10, and aspartate 132 each contribute to the Mg(2+) site. The active-site Proton donor is aspartate 10.

This sequence belongs to the 5'(3')-deoxyribonucleotidase family. It depends on Mg(2+) as a cofactor.

Functionally, dephosphorylates nucleoside monophosphates such as the 5' and 2'(3')-phosphates of deoxyribonucleotides in vitro. Also catalyzes the dephosphorylation of coenzyme A (CoA), pyridoxal-5'-phosphate (PLP), riboflavine-5-phosphate (FMN) and nicotinamide adenine dinucleotide phosphate (NADP) in vitro. This chain is 5'(3')-deoxyribonucleotidase (yorS), found in Bacillus subtilis (strain 168).